Reading from the N-terminus, the 139-residue chain is Protein PsiE homolog (139 aa).

The next 4 membrane-spanning stretches (helical) occupy residues Ile20 to Ile40, Ala60 to Phe80, His85 to Val105, and Val111 to Leu131.

It belongs to the PsiE family.

It localises to the cell inner membrane. This chain is Protein PsiE homolog, found in Haemophilus influenzae (strain 86-028NP).